We begin with the raw amino-acid sequence, 1074 residues long: Phospholipase D1 (1074 aa).

The region spanning 81 to 212 is the PX domain; that stretch reads IKAQVLEVER…TEFLDISQLS (132 aa). In terms of domain architecture, PH spans 219 to 328; the sequence is PKGIEGMIMK…WGGAIEEFIQ (110 aa). 2 S-palmitoyl cysteine lipidation sites follow: Cys240 and Cys241. The region spanning 459–486 is the PLD phosphodiesterase 1 domain; the sequence is YLWAHHEKLVIIDQSVAFVGGIDLAYGR. The interval 463–928 is catalytic; the sequence is HHEKLVIIDQ…MLGKRDSEMA (466 aa). A phosphoserine mark is found at Ser499, Ser561, and Ser629. The PLD phosphodiesterase 2 domain maps to 891–918; it reads ELIYVHSKLLIADDNTVIIGSANINDRS.

The protein belongs to the phospholipase D family. Interacts with PIP5K1B. In terms of tissue distribution, expressed abundantly in the pancreas and heart and at high levels in brain, placenta, spleen, uterus and small intestine.

The protein localises to the cytoplasm. Its subcellular location is the perinuclear region. It is found in the endoplasmic reticulum membrane. It localises to the golgi apparatus membrane. The protein resides in the late endosome membrane. The catalysed reaction is a 1,2-diacyl-sn-glycero-3-phosphocholine + H2O = a 1,2-diacyl-sn-glycero-3-phosphate + choline + H(+). It carries out the reaction ethanol + a 1,2-diacyl-sn-glycero-3-phosphocholine = 1,2-diacyl-sn-glycero-3-phosphoethanol + choline. The enzyme catalyses 1,2-dihexadecanoyl-sn-glycero-3-phosphocholine + H2O = 1,2-dihexadecanoyl-sn-glycero-3-phosphate + choline + H(+). Its activity is regulated as follows. Stimulated by phosphatidylinositol 4,5-bisphosphate and phosphatidylinositol 3,4,5-trisphosphate, activated by the phosphokinase C-alpha, by the ADP-ribosylation factor-1 (ARF-1), and to a lesser extent by GTP-binding proteins: RHO A, RAC-1 and CDC42. Inhibited by oleate. Its function is as follows. Function as phospholipase selective for phosphatidylcholine. Implicated as a critical step in numerous cellular pathways, including signal transduction, membrane trafficking, and the regulation of mitosis. May be involved in the regulation of perinuclear intravesicular membrane traffic. This chain is Phospholipase D1, found in Homo sapiens (Human).